Consider the following 592-residue polypeptide: Aspartate--tRNA(Asp/Asn) ligase (592 aa).

Glutamate 177 contributes to the L-aspartate binding site. Residues 201–204 (QIFK) form an aspartate region. The L-aspartate site is built by arginine 223 and histidine 452. 223–225 (RDE) lines the ATP pocket. Glutamate 486 contributes to the ATP binding site. Residue arginine 493 participates in L-aspartate binding. 538 to 541 (GIDR) serves as a coordination point for ATP.

This sequence belongs to the class-II aminoacyl-tRNA synthetase family. Type 1 subfamily. Homodimer.

The protein localises to the cytoplasm. It catalyses the reaction tRNA(Asx) + L-aspartate + ATP = L-aspartyl-tRNA(Asx) + AMP + diphosphate. Its function is as follows. Aspartyl-tRNA synthetase with relaxed tRNA specificity since it is able to aspartylate not only its cognate tRNA(Asp) but also tRNA(Asn). Reaction proceeds in two steps: L-aspartate is first activated by ATP to form Asp-AMP and then transferred to the acceptor end of tRNA(Asp/Asn). This chain is Aspartate--tRNA(Asp/Asn) ligase, found in Anaplasma marginale (strain Florida).